The primary structure comprises 492 residues: Aspartyl/glutamyl-tRNA(Asn/Gln) amidotransferase subunit B (492 aa).

It belongs to the GatB/GatE family. GatB subfamily. As to quaternary structure, heterotrimer of A, B and C subunits.

It carries out the reaction L-glutamyl-tRNA(Gln) + L-glutamine + ATP + H2O = L-glutaminyl-tRNA(Gln) + L-glutamate + ADP + phosphate + H(+). It catalyses the reaction L-aspartyl-tRNA(Asn) + L-glutamine + ATP + H2O = L-asparaginyl-tRNA(Asn) + L-glutamate + ADP + phosphate + 2 H(+). In terms of biological role, allows the formation of correctly charged Asn-tRNA(Asn) or Gln-tRNA(Gln) through the transamidation of misacylated Asp-tRNA(Asn) or Glu-tRNA(Gln) in organisms which lack either or both of asparaginyl-tRNA or glutaminyl-tRNA synthetases. The reaction takes place in the presence of glutamine and ATP through an activated phospho-Asp-tRNA(Asn) or phospho-Glu-tRNA(Gln). This is Aspartyl/glutamyl-tRNA(Asn/Gln) amidotransferase subunit B from Bradyrhizobium diazoefficiens (strain JCM 10833 / BCRC 13528 / IAM 13628 / NBRC 14792 / USDA 110).